Reading from the N-terminus, the 296-residue chain is Outer surface protein B (296 aa).

An N-terminal signal peptide occupies residues 1-15 (MRLLIGFALALALIG). Residue C16 is the site of N-palmitoyl cysteine attachment. C16 carries the S-diacylglycerol cysteine lipid modification. Residues 25 to 51 (GSQKENDLNLEDSSKKSHQNAKQDLPA) are disordered. Residues 28-39 (KENDLNLEDSSK) show a composition bias toward basic and acidic residues.

The protein localises to the cell outer membrane. In Borreliella burgdorferi (strain ATCC 35210 / DSM 4680 / CIP 102532 / B31) (Borrelia burgdorferi), this protein is Outer surface protein B (ospB).